The chain runs to 402 residues: LIM homeobox transcription factor 1-beta (402 aa).

LIM zinc-binding domains follow at residues 56–106 and 115–168; these read CEGC…CKQD and CSGC…CKGD. Disordered regions lie at residues 176-229 and 326-346; these read LSSV…LTTQ and PYGS…PGDH. A DNA-binding region (homeobox) is located at residues 219–278; the sequence is PKRPRTILTTQQRRAFKASFEVSSKPCRKVRETLAAETGLSVRVVQVWFQNQRAKMKKLA. Positions 326-338 are enriched in polar residues; the sequence is PYGSSDPFQQGLT.

Interacts with DHX9. Expressed in most tissues. Highest levels in testis, thyroid, duodenum, skeletal muscle, and pancreatic islets.

It localises to the nucleus. Transcription factor involved in the regulation of podocyte-expressed genes. Essential for the specification of dorsal limb fate at both the zeugopodal and autopodal levels. The chain is LIM homeobox transcription factor 1-beta (LMX1B) from Homo sapiens (Human).